We begin with the raw amino-acid sequence, 319 residues long: Tetrahydromethanopterin S-methyltransferase subunit H (319 aa).

It belongs to the MtrH family. In terms of assembly, the complex is composed of 8 subunits; MtrA, MtrB, MtrC, MtrD, MtrE, MtrF, MtrG and MtrH.

It catalyses the reaction 5-methyl-5,6,7,8-tetrahydromethanopterin + coenzyme M + 2 Na(+)(in) = 5,6,7,8-tetrahydromethanopterin + methyl-coenzyme M + 2 Na(+)(out). It participates in one-carbon metabolism; methanogenesis from CO(2); methyl-coenzyme M from 5,10-methylene-5,6,7,8-tetrahydromethanopterin: step 2/2. Its function is as follows. Part of a complex that catalyzes the formation of methyl-coenzyme M and tetrahydromethanopterin from coenzyme M and methyl-tetrahydromethanopterin. This is an energy-conserving, sodium-ion translocating step. MtrH catalyzes the transfer of the methyl group from methyl-tetrahydromethanopterin to the corrinoid prosthetic group of MtrA. This chain is Tetrahydromethanopterin S-methyltransferase subunit H, found in Methanococcus aeolicus (strain ATCC BAA-1280 / DSM 17508 / OCM 812 / Nankai-3).